A 665-amino-acid chain; its full sequence is UvrABC system protein B (665 aa).

The region spanning 25-176 is the Helicase ATP-binding domain; sequence NSIEKGNRFQ…NQRQLLRDLV (152 aa). An ATP-binding site is contributed by 38-45; sequence GATGTGKT. Positions 91 to 114 match the Beta-hairpin motif; sequence YYDYYQPEAYIPVSDTYIEKSASI. The Helicase C-terminal domain maps to 429 to 595; the sequence is QVDDLLGEIK…PIVTRSSNAI (167 aa). The 36-residue stretch at 626–661 folds into the UVR domain; it reads PELIGQLEEQMKEAAKKLEFEEAAKYRDRIQHLRDK.

Belongs to the UvrB family. As to quaternary structure, forms a heterotetramer with UvrA during the search for lesions. Interacts with UvrC in an incision complex.

It is found in the cytoplasm. Functionally, the UvrABC repair system catalyzes the recognition and processing of DNA lesions. A damage recognition complex composed of 2 UvrA and 2 UvrB subunits scans DNA for abnormalities. Upon binding of the UvrA(2)B(2) complex to a putative damaged site, the DNA wraps around one UvrB monomer. DNA wrap is dependent on ATP binding by UvrB and probably causes local melting of the DNA helix, facilitating insertion of UvrB beta-hairpin between the DNA strands. Then UvrB probes one DNA strand for the presence of a lesion. If a lesion is found the UvrA subunits dissociate and the UvrB-DNA preincision complex is formed. This complex is subsequently bound by UvrC and the second UvrB is released. If no lesion is found, the DNA wraps around the other UvrB subunit that will check the other stand for damage. The protein is UvrABC system protein B of Gloeothece citriformis (strain PCC 7424) (Cyanothece sp. (strain PCC 7424)).